The sequence spans 245 residues: 1-(5-phosphoribosyl)-5-[(5-phosphoribosylamino)methylideneamino] imidazole-4-carboxamide isomerase (245 aa).

The Proton acceptor role is filled by D8. D130 functions as the Proton donor in the catalytic mechanism.

The protein belongs to the HisA/HisF family.

It localises to the cytoplasm. It carries out the reaction 1-(5-phospho-beta-D-ribosyl)-5-[(5-phospho-beta-D-ribosylamino)methylideneamino]imidazole-4-carboxamide = 5-[(5-phospho-1-deoxy-D-ribulos-1-ylimino)methylamino]-1-(5-phospho-beta-D-ribosyl)imidazole-4-carboxamide. Its pathway is amino-acid biosynthesis; L-histidine biosynthesis; L-histidine from 5-phospho-alpha-D-ribose 1-diphosphate: step 4/9. The polypeptide is 1-(5-phosphoribosyl)-5-[(5-phosphoribosylamino)methylideneamino] imidazole-4-carboxamide isomerase (Pseudomonas entomophila (strain L48)).